The sequence spans 328 residues: MCTGDRKMPKSILLTGSTGFVGTNLVKSLTLKSDYIVKSAVRHAVNKDDGLLFEVGDINASTDFELPLKNTTVVVHCAARAHVMDDKEAEPLTLYREVNTAGTVNLAKQAIDSGVKRFIFISSIKVNGEGTLVGCPFKTEDNHAPEDDYGLSKSEAEKQLVALAKDSSMEVVIIRPTIVYGPGVKANFASLMRLVSKGIPLPFGSITQNKRSLVSINNLVDLIVTCIDHPKAANQVFLVSDGHDVSTAEMVRELAIALDKPTWQLPVPIWCYKLFGKLFGKSDIVDRLTGTLQVDISHTKETLGWKPPQTLQEGFKQTAQAFLQANNR.

NAD(+) is bound by residues 20-21 (FV), 41-46 (VRHAVN), 57-58 (DI), 77-81 (CAARA), serine 123, tyrosine 149, and lysine 153. Positions 123 and 149 each coordinate substrate. Tyrosine 149 functions as the Proton acceptor in the catalytic mechanism. Substrate-binding positions include 198–199 (GI) and 215–217 (SIN).

The protein belongs to the NAD(P)-dependent epimerase/dehydratase family. As to quaternary structure, homodimer. NAD(+) is required as a cofactor.

It catalyses the reaction UDP-alpha-D-glucose = UDP-alpha-D-galactose. It participates in bacterial outer membrane biogenesis; LPS O-antigen biosynthesis. Involved in the metabolism of galactose. Catalyzes the conversion of UDP-galactose (UDP-Gal) to UDP-glucose (UDP-Glc) through a mechanism involving the transient reduction of NAD. The sequence is that of UDP-glucose 4-epimerase (galE) from Vibrio cholerae.